A 320-amino-acid polypeptide reads, in one-letter code: Aminoacyl tRNA synthase complex-interacting multifunctional protein 2 (320 aa).

At serine 36 the chain carries Phosphoserine. The interval 82–162 (TPDADLDVTN…HTHSAVRSVP (81 aa)) is interaction with PRKN. The interval 162–225 (PANLLQCFGE…FLFSLFGQKQ (64 aa)) is interaction with TP53. Residues 220-317 (LFGQKQDAVN…NLAPFHTALK (98 aa)) enclose the GST C-terminal domain.

As to quaternary structure, part of the multisynthetase complex (MSC), a multisubunit complex that groups tRNA ligases for Arg (RARS1), Asp (DARS1), Gln (QARS1), Ile (IARS1), Leu (LARS1), Lys (KARS1), Met (MARS1) the bifunctional ligase for Glu and Pro (EPRS1) and the auxiliary subunits AIMP1/p43, AIMP2/p38 and EEF1E1/p18. Interacts (via N-terminus) with KARS1. Interacts with EPRS1. Forms a linear complex that contains MARS1, EEF1E1, EPRS1 and AIMP2 that is at the core of the multisubunit complex. Binds FUBP1 (via C-terminus). Interacts in both its unphosphorylated and phosphorylated forms with p53/TP53 (via N-terminus) in the nucleus following UV irradiation. Interacts (via N-terminus) with PRKN/parkin (via first RING-type domain). Interacts with TARS3. Post-translationally, phosphorylated on serine residues in response to UV irradiation. In terms of processing, ubiquitinated by PRKN, leading to its degradation by the proteasome.

The protein resides in the cytoplasm. It is found in the cytosol. It localises to the nucleus. In terms of biological role, required for assembly and stability of the aminoacyl-tRNA synthase complex. Mediates ubiquitination and degradation of FUBP1, a transcriptional activator of MYC, leading to MYC down-regulation which is required for aveolar type II cell differentiation. Blocks MDM2-mediated ubiquitination and degradation of p53/TP53. Functions as a proapoptotic factor. The chain is Aminoacyl tRNA synthase complex-interacting multifunctional protein 2 (AIMP2) from Bos taurus (Bovine).